Here is a 275-residue protein sequence, read N- to C-terminus: Large ribosomal subunit protein uL2 (275 aa).

The tract at residues 208–275 (AGAKRWRGRR…NMIIRDRRKK (68 aa)) is disordered. 2 stretches are compositionally biased toward basic residues: residues 209–219 (GAKRWRGRRPT) and 254–263 (KGYKTRRNKR).

Belongs to the universal ribosomal protein uL2 family. As to quaternary structure, part of the 50S ribosomal subunit. Forms a bridge to the 30S subunit in the 70S ribosome.

One of the primary rRNA binding proteins. Required for association of the 30S and 50S subunits to form the 70S ribosome, for tRNA binding and peptide bond formation. It has been suggested to have peptidyltransferase activity; this is somewhat controversial. Makes several contacts with the 16S rRNA in the 70S ribosome. The sequence is that of Large ribosomal subunit protein uL2 from Coxiella burnetii (strain CbuK_Q154) (Coxiella burnetii (strain Q154)).